We begin with the raw amino-acid sequence, 242 residues long: uncharacterized protein (242 aa).

This is an uncharacterized protein from Agrobacterium vitis (Rhizobium vitis).